Here is a 204-residue protein sequence, read N- to C-terminus: Transcriptional regulator GfcR 1 (204 aa).

It belongs to the purine/pyrimidine phosphoribosyltransferase family. GfcR subfamily.

This Methanosarcina barkeri (strain Fusaro / DSM 804) protein is Transcriptional regulator GfcR 1.